The sequence spans 382 residues: Lipid-A-disaccharide synthase (382 aa).

It belongs to the LpxB family.

The enzyme catalyses 2-N,3-O-bis[(3R)-3-hydroxytetradecanoyl]-alpha-D-glucosaminyl 1-phosphate + UDP-2-N,3-O-bis[(3R)-3-hydroxytetradecanoyl]-alpha-D-glucosamine = lipid A disaccharide (E. coli) + UDP + H(+). It catalyses the reaction a lipid X + a UDP-2-N,3-O-bis[(3R)-3-hydroxyacyl]-alpha-D-glucosamine = a lipid A disaccharide + UDP + H(+). It participates in glycolipid biosynthesis; lipid IV(A) biosynthesis; lipid IV(A) from (3R)-3-hydroxytetradecanoyl-[acyl-carrier-protein] and UDP-N-acetyl-alpha-D-glucosamine: step 5/6. In terms of biological role, condensation of UDP-2,3-diacylglucosamine and 2,3-diacylglucosamine-1-phosphate to form lipid A disaccharide, a precursor of lipid A, a phosphorylated glycolipid that anchors the lipopolysaccharide to the outer membrane of the cell. The sequence is that of Lipid-A-disaccharide synthase from Shigella boydii serotype 18 (strain CDC 3083-94 / BS512).